Reading from the N-terminus, the 403-residue chain is Phosphoglycerate kinase (403 aa).

Substrate is bound by residues 21-23 (DFN), R36, 59-62 (HLGR), R119, and R159. ATP is bound by residues K214, G301, E332, and 359 to 362 (GGDS).

The protein belongs to the phosphoglycerate kinase family. In terms of assembly, monomer.

The protein localises to the cytoplasm. It catalyses the reaction (2R)-3-phosphoglycerate + ATP = (2R)-3-phospho-glyceroyl phosphate + ADP. The protein operates within carbohydrate degradation; glycolysis; pyruvate from D-glyceraldehyde 3-phosphate: step 2/5. The chain is Phosphoglycerate kinase from Lactobacillus gasseri (strain ATCC 33323 / DSM 20243 / BCRC 14619 / CIP 102991 / JCM 1131 / KCTC 3163 / NCIMB 11718 / NCTC 13722 / AM63).